A 1139-amino-acid chain; its full sequence is Exportin-T (1139 aa).

The disordered stretch occupies residues 562–589 (ARNKLRAAQGSGRTTPSSSDNVDLGPSS). Residues 572–589 (SGRTTPSSSDNVDLGPSS) are compositionally biased toward polar residues.

Belongs to the exportin family.

It localises to the nucleus. Its subcellular location is the cytoplasm. Functionally, tRNA nucleus export receptor which facilitates tRNA translocation across the nuclear pore complex. Involved in pre-tRNA splicing, probably by affecting the interaction of pre-tRNA with splicing endonuclease. In Cryptococcus neoformans var. neoformans serotype D (strain B-3501A) (Filobasidiella neoformans), this protein is Exportin-T (LOS1).